Consider the following 357-residue polypeptide: MSLTRLLIKDFRNIENADLALSPGFNFLVGANGSGKTSVLEAIYTLGHGRAFRSLQPGRVIRHEQEAFVLHGRLQSEERETSIGLTKDKQGDSKVRIDGTDGHKIAELAHLMPMQLITPEGFTLLNGGPKYRRAFLDWGCFHNEAGFFTAWSNLKRLLKQRNAALRQVSRYEQLRPWDKELIPLAEQISTWRAEYSSAIAQDMADTCQQFLPEFSLTFSFQRGWEKETDYADVLERSFERDRMLTYTAHGPHKADFRIRADGAPVEDTLSRGQLKLLMCALRLAQGEFLTRESGRRCLYLIDDFASELDDARRGLLASRLKATQSQVFVSAISAEHVIDMSDENSKMFTVEKGKITD.

30–37 (GANGSGKT) lines the ATP pocket.

Belongs to the RecF family.

The protein resides in the cytoplasm. Its function is as follows. The RecF protein is involved in DNA metabolism; it is required for DNA replication and normal SOS inducibility. RecF binds preferentially to single-stranded, linear DNA. It also seems to bind ATP. In Salmonella heidelberg (strain SL476), this protein is DNA replication and repair protein RecF.